Reading from the N-terminus, the 250-residue chain is 2,3-bisphosphoglycerate-dependent phosphoglycerate mutase (250 aa).

Residues 10–17, 23–24, R62, 89–92, K100, 116–117, and 185–186 contribute to the substrate site; these read RHGESQWN, TG, ERHY, RR, and GN. Catalysis depends on H11, which acts as the Tele-phosphohistidine intermediate. E89 acts as the Proton donor/acceptor in catalysis.

This sequence belongs to the phosphoglycerate mutase family. BPG-dependent PGAM subfamily. Homodimer.

It carries out the reaction (2R)-2-phosphoglycerate = (2R)-3-phosphoglycerate. Its pathway is carbohydrate degradation; glycolysis; pyruvate from D-glyceraldehyde 3-phosphate: step 3/5. In terms of biological role, catalyzes the interconversion of 2-phosphoglycerate and 3-phosphoglycerate. The sequence is that of 2,3-bisphosphoglycerate-dependent phosphoglycerate mutase from Erwinia tasmaniensis (strain DSM 17950 / CFBP 7177 / CIP 109463 / NCPPB 4357 / Et1/99).